The following is a 148-amino-acid chain: Photosystem I reaction center subunit XI (148 aa).

Helical transmembrane passes span 48 to 68, 73 to 93, and 122 to 142; these read LEIGLAHGYFLIGPFAQLGPL, IGLLAGFLSTIGLILILTLGL, and GGFFVGACGSAGFAFICLSSI.

It belongs to the PsaL family.

It is found in the plastid. The protein localises to the chloroplast thylakoid membrane. The chain is Photosystem I reaction center subunit XI from Thalassiosira pseudonana (Marine diatom).